A 696-amino-acid polypeptide reads, in one-letter code: Solute carrier family 53 member 1 (696 aa).

The Cytoplasmic segment spans residues 1–228 (MKFAEHLSAH…RVPPLGAAQP (228 aa)). Residues 2–224 (KFAEHLSAHI…MKRLRVPPLG (223 aa)) enclose the SPX domain. The segment at 158-165 (KILKKHDK) is important for inositol polyphosphate binding. Residues 229-259 (APAWTTFRVGLFCGIFIVLNITLVLAAVFKL) form a helical membrane-spanning segment. At 260–264 (ETDRT) the chain is on the extracellular side. A helical membrane pass occupies residues 265 to 296 (VWPLIRIYRGGFLLIEFLFLLGINTYGWRQAG). Topologically, residues 297-309 (VNHVLIFELNPRN) are cytoplasmic. Residues 310–337 (NLSHQHLFEIAGFLGILWCLSLLACFFA) traverse the membrane as a helical segment. At 338 to 343 (PISVVP) the chain is on the extracellular side. The helical transmembrane segment at 344 to 365 (IYVYPLALYGFMVFFLINPTKT) threads the bilayer. The helical intramembrane region spans 366–383 (FYYKSRFWLLKLLFRVFT). Over 384–388 (APFHK) the chain is Cytoplasmic. Residues 389-422 (VGFADFWLADQLNSLSVILMDLEYMICFYSFELK) form a discontinuously helical membrane-spanning segment. Positions 398 and 401 each coordinate phosphate. Topologically, residues 423–429 (WDENKSL) are extracellular. The chain crosses the membrane as a discontinuously helical span at residues 430–471 (LPNDLQEPEFCHRYTYGVRAIVQCIPAWLRFIQCLRRYRDTK). One can recognise an EXS domain in the interval 439–643 (FCHRYTYGVR…LNADDQTLLE (205 aa)). Residue arginine 472 is a topological domain, cytoplasmic. Residues 473-503 (AFPHLVNAGKYSTTFFTVTFAALYSTHKERQ) form a helical membrane-spanning segment. Residues lysine 482 and tyrosine 483 each coordinate phosphate. At 504–506 (HSD) the chain is on the extracellular side. Residues 507–534 (TMVFLYLWVVFCAISSCYTLIWDLKMDW) form a helical membrane-spanning segment. Topologically, residues 535-553 (GLFDKNAGENTFLREEIVY) are cytoplasmic. The discontinuously helical transmembrane segment at 554 to 585 (PQKAYYYCAIIEDVILRFAWTIQISITATAFQ) threads the bilayer. Arginine 570 contributes to the phosphate binding site. The Extracellular portion of the chain corresponds to 586-587 (PH). The helical transmembrane segment at 588-626 (VGDIIATVFAPLEVFRRFVWNFFRLENEHLNNCGEFRAV) threads the bilayer. Phosphate is bound by residues arginine 603 and arginine 604. Residues 627–696 (RDISVAPLNA…IEDTDDEANT (70 aa)) are Cytoplasmic-facing. A Phosphoserine modification is found at serine 668. A disordered region spans residues 672 to 696 (PRLASQSKARDTKVLIEDTDDEANT). Phosphothreonine is present on threonine 690.

This sequence belongs to the SYG1 (TC 2.A.94) family. As to quaternary structure, homodimer.

It localises to the cell membrane. It carries out the reaction phosphate(in) = phosphate(out). Functionally, inorganic ion transporter that mediates phosphate ion export across plasma membrane. Plays a major role in phosphate homeostasis, preventing intracellular phosphate accumulation and possible calcium phosphate precipitation, ultimately preserving calcium signaling. Binds inositol hexakisphosphate (Ins6P) and similar inositol polyphosphates, such as 5-diphospho-inositol pentakisphosphate (5-InsP7), which are important intracellular signaling molecules involved in regulation of phosphate flux. This Cricetulus griseus (Chinese hamster) protein is Solute carrier family 53 member 1 (XPR1).